The sequence spans 752 residues: THO complex subunit HPR1 (752 aa).

Ser-234 carries the phosphoserine modification. The tract at residues 648–752 is disordered; it reads RKKRALEEEA…SNGSSTQDMK (105 aa). A compositionally biased stretch (basic and acidic residues) spans 692–702; the sequence is EISEENTKIKS. Residues 720 to 752 show a composition bias toward polar residues; the sequence is PQNTTAQLENPKTEDNNAATSNISNGSSTQDMK.

As to quaternary structure, component of the THO complex, which is composed of HPR1, MFT1, THO2 and THP2. Together with SUB2, TEX1 and YRA1, THO forms the transcription/export (TREX) complex. THO associates with DNA and RNA in vitro.

The protein resides in the nucleus. Functionally, component the THO subcomplex of the TREX complex, which operates in coupling transcription elongation to mRNA export. The THO complex is recruited to transcribed genes and moves along the gene with the elongating polymerase during transcription. THO is important for stabilizing nascent RNA in the RNA polymerase II elongation complex by preventing formation of DNA:RNA hybrids behind the elongating polymerase. It functions in cotranscriptional formation of an export-competent messenger ribonucleoprotein particle (mRNP) by facilitating the loading of ATP-dependent RNA helicase SUB2 and the mRNA export factor YRA1 along the nascent mRNA. The polypeptide is THO complex subunit HPR1 (HPR1) (Saccharomyces cerevisiae (strain ATCC 204508 / S288c) (Baker's yeast)).